The sequence spans 390 residues: GTPase Obg (390 aa).

The region spanning 1–159 (MKFVDEASIL…RDLLLELMLL (159 aa)) is the Obg domain. A disordered region spans residues 127-147 (NTRFKSSVNRTPRQKTNGTPG). A compositionally biased stretch (polar residues) spans 129–145 (RFKSSVNRTPRQKTNGT). The OBG-type G domain maps to 160-333 (ADVGMLGMPN…LCWDVMTFII (174 aa)). Residues 166–173 (GMPNAGKS), 191–195 (FTTLV), 213–216 (DIPG), 283–286 (NKID), and 314–316 (SAA) contribute to the GTP site. Mg(2+) is bound by residues Ser-173 and Thr-193.

It belongs to the TRAFAC class OBG-HflX-like GTPase superfamily. OBG GTPase family. In terms of assembly, monomer. The cofactor is Mg(2+).

The protein resides in the cytoplasm. Functionally, an essential GTPase which binds GTP, GDP and possibly (p)ppGpp with moderate affinity, with high nucleotide exchange rates and a fairly low GTP hydrolysis rate. Plays a role in control of the cell cycle, stress response, ribosome biogenesis and in those bacteria that undergo differentiation, in morphogenesis control. The polypeptide is GTPase Obg (Salmonella gallinarum (strain 287/91 / NCTC 13346)).